The chain runs to 392 residues: Ribonuclease D (392 aa).

A 3'-5' exonuclease domain is found at leucine 12–leucine 178. Positions asparagine 217 to glutamate 298 constitute an HRDC domain.

Belongs to the RNase D family. It depends on a divalent metal cation as a cofactor.

The protein resides in the cytoplasm. The catalysed reaction is Exonucleolytic cleavage that removes extra residues from the 3'-terminus of tRNA to produce 5'-mononucleotides.. Exonuclease involved in the 3' processing of various precursor tRNAs. Initiates hydrolysis at the 3'-terminus of an RNA molecule and releases 5'-mononucleotides. This chain is Ribonuclease D, found in Acidiphilium cryptum (strain JF-5).